Consider the following 572-residue polypeptide: MKKIIGIGVSDGIAVAKAFIIQTPQFDVKKYTNVKMTPTQAKKLLSSAFQKAKKDLEEIKTITVKNINQEAGMIFDAHIQILNDPTITEQLEQQLNKNIHPVIAVDNVFQQTALMFSEMDDKYFKERASDILDLHQRLLSYLTGVKLNDLIRIKSDVIIVANDLTPSQTATLNKKYVKGFLTESGGKTSHAAIMARSMEIPAIVGLKNITSKVEDGKTVGINGRKGIVGFDFSSKDITQWKQEKELESNFQNELKQYTNKLVKTLDGYEVIVASNIGNVKDMDLAVEYNTNGIGLFRTEFLYMSSQDWPDESVQFEAYKTVLQKAKNDLVIIRTLDIGGDKKLNYFQFPHEDNPFLGYRAIRLTLDKQAVFKTQLRALLRASDYGNLGIMFPMVATLDELVQVKQLLTKVQQEFNETKKFKLGIMIEIPSAALAADCLGKHVDFFSIGSNDLIQYSFAADRMNKNVSYLYQPLNPALLRLIKLVVEGGKLNNVWTGMCGEMASDQYAIPLLLGLGLTELSMSASSMFKARMVIAKITINECKSLVEKALKLTSDSAVRKLVENFFKKKNIFI.

Catalysis depends on histidine 190, which acts as the Tele-phosphohistidine intermediate. Phosphoenolpyruvate contacts are provided by arginine 297 and arginine 333. Mg(2+)-binding residues include glutamate 427 and aspartate 451. Phosphoenolpyruvate contacts are provided by residues 450–451 and arginine 461; that span reads ND. Cysteine 498 acts as the Proton donor in catalysis.

Belongs to the PEP-utilizing enzyme family. In terms of assembly, homodimer. Mg(2+) serves as cofactor.

It localises to the cytoplasm. It catalyses the reaction L-histidyl-[protein] + phosphoenolpyruvate = N(pros)-phospho-L-histidyl-[protein] + pyruvate. In terms of biological role, general (non sugar-specific) component of the phosphoenolpyruvate-dependent sugar phosphotransferase system (sugar PTS). This major carbohydrate active-transport system catalyzes the phosphorylation of incoming sugar substrates concomitantly with their translocation across the cell membrane. Enzyme I transfers the phosphoryl group from phosphoenolpyruvate (PEP) to the phosphoryl carrier protein (HPr). The protein is Phosphoenolpyruvate-protein phosphotransferase (ptsI) of Mycoplasma genitalium (strain ATCC 33530 / DSM 19775 / NCTC 10195 / G37) (Mycoplasmoides genitalium).